A 246-amino-acid chain; its full sequence is Protein PHLOEM PROTEIN 2-LIKE A1 (246 aa).

Vascular tissues, specifically in phloem companion cell-sieve element complexes.

The sequence is that of Protein PHLOEM PROTEIN 2-LIKE A1 (PP2A1) from Arabidopsis thaliana (Mouse-ear cress).